Here is a 208-residue protein sequence, read N- to C-terminus: Ras-related protein M-Ras (208 aa).

The GTP site is built by Asp21, Gly22, Gly23, Val24, Gly25, Lys26, Ser27, Ala28, Phe38, Val39, Pro40, Tyr42, Pro44, and Thr45. A Mg(2+)-binding site is contributed by Ser27. The Effector region signature appears at 42–50 (YDPTIEDSY). The Mg(2+) site is built by Thr45 and Asp67. GTP is bound by residues Gly70, Asn126, Lys127, Asp129, Ser156, Ala157, and Lys158. Cys205 is subject to Cysteine methyl ester. Residue Cys205 is the site of S-geranylgeranyl cysteine attachment. Positions 206–208 (VIL) are cleaved as a propeptide — removed in mature form.

This sequence belongs to the small GTPase superfamily. Ras family. Component of the SHOC2-MRAS-PP1c (SMP) holophosphatase complex consisting of SHOC2, GTP-bound M-Ras/MRAS and the catalytic subunit of protein phosphatase 1 (either PPP1CA, PPP1CB or PPP1CC). Interacts (active GTP-bound form) with both SHOC2 and PP1c (all isoforms) to form a tertiary complex; SHOC2 and PP1c preferably bind M-Ras/MRAS, but they also bind K-Ras/KRAS, N-Ras/NRAS and H-Ras/HRAS. Interacts with RGL3. Interacts (active GTP-bound form preferentially) with RGS14. Requires Mg(2+) as cofactor. Expression highly restricted to the brain and heart.

It is found in the cell membrane. It catalyses the reaction GTP + H2O = GDP + phosphate + H(+). Its function is as follows. Signal transducer in the Ras-MAPK signaling pathway that regulates cell proliferation and survival. Core component of the SHOC2-MRAS-PP1c (SMP) holophosphatase complex that regulates the MAPK pathway activation. The formation of the SMP complex only occurs when MRAS is GTP-bound. MRAS has low intrinsic GTPase activity and may require additional factors for activation. The SMP complex specifically dephosphorylates the inhibitory phosphorylation at 'Ser-259' of RAF1 kinase, 'Ser-365' of BRAF kinase and 'Ser-214' of ARAF kinase, stimulating their kinase activities. The polypeptide is Ras-related protein M-Ras (MRAS) (Homo sapiens (Human)).